The primary structure comprises 424 residues: UDP-N-acetylglucosamine 1-carboxyvinyltransferase (424 aa).

22–23 contributes to the phosphoenolpyruvate binding site; sequence KN. A UDP-N-acetyl-alpha-D-glucosamine-binding site is contributed by arginine 93. Cysteine 117 serves as the catalytic Proton donor. Cysteine 117 is subject to 2-(S-cysteinyl)pyruvic acid O-phosphothioketal. UDP-N-acetyl-alpha-D-glucosamine-binding positions include 162-165, aspartate 307, and isoleucine 329; that span reads KVSV.

This sequence belongs to the EPSP synthase family. MurA subfamily.

The protein localises to the cytoplasm. The enzyme catalyses phosphoenolpyruvate + UDP-N-acetyl-alpha-D-glucosamine = UDP-N-acetyl-3-O-(1-carboxyvinyl)-alpha-D-glucosamine + phosphate. Its pathway is cell wall biogenesis; peptidoglycan biosynthesis. Functionally, cell wall formation. Adds enolpyruvyl to UDP-N-acetylglucosamine. This chain is UDP-N-acetylglucosamine 1-carboxyvinyltransferase, found in Glaesserella parasuis serovar 5 (strain SH0165) (Haemophilus parasuis).